Reading from the N-terminus, the 247-residue chain is Adenosylcobinamide-GDP ribazoletransferase (247 aa).

6 helical membrane passes run 34–54 (IVMF…IFIL), 59–79 (CGIP…TGGF), 113–133 (GGLA…ELAL), 138–158 (MLAA…LLMY), 171–191 (VFIG…AVIV), and 194–214 (VLLP…AIFI).

It belongs to the CobS family. Mg(2+) is required as a cofactor.

Its subcellular location is the cell inner membrane. It carries out the reaction alpha-ribazole + adenosylcob(III)inamide-GDP = adenosylcob(III)alamin + GMP + H(+). The enzyme catalyses alpha-ribazole 5'-phosphate + adenosylcob(III)inamide-GDP = adenosylcob(III)alamin 5'-phosphate + GMP + H(+). Its pathway is cofactor biosynthesis; adenosylcobalamin biosynthesis; adenosylcobalamin from cob(II)yrinate a,c-diamide: step 7/7. Joins adenosylcobinamide-GDP and alpha-ribazole to generate adenosylcobalamin (Ado-cobalamin). Also synthesizes adenosylcobalamin 5'-phosphate from adenosylcobinamide-GDP and alpha-ribazole 5'-phosphate. This is Adenosylcobinamide-GDP ribazoletransferase from Salmonella schwarzengrund (strain CVM19633).